The following is a 172-amino-acid chain: ATP synthase subunit b (172 aa).

The helical transmembrane segment at 17 to 37 (IVFSAIVLAIVLPFFWWFVIP) threads the bilayer.

Belongs to the ATPase B chain family. In terms of assembly, F-type ATPases have 2 components, F(1) - the catalytic core - and F(0) - the membrane proton channel. F(1) has five subunits: alpha(3), beta(3), gamma(1), delta(1), epsilon(1). F(0) has three main subunits: a(1), b(2) and c(10-14). The alpha and beta chains form an alternating ring which encloses part of the gamma chain. F(1) is attached to F(0) by a central stalk formed by the gamma and epsilon chains, while a peripheral stalk is formed by the delta and b chains.

The protein resides in the cell membrane. Functionally, f(1)F(0) ATP synthase produces ATP from ADP in the presence of a proton or sodium gradient. F-type ATPases consist of two structural domains, F(1) containing the extramembraneous catalytic core and F(0) containing the membrane proton channel, linked together by a central stalk and a peripheral stalk. During catalysis, ATP synthesis in the catalytic domain of F(1) is coupled via a rotary mechanism of the central stalk subunits to proton translocation. Its function is as follows. Component of the F(0) channel, it forms part of the peripheral stalk, linking F(1) to F(0). The sequence is that of ATP synthase subunit b from Tropheryma whipplei (strain TW08/27) (Whipple's bacillus).